The primary structure comprises 90 residues: MTWKLFICFLSFGVIFLRVSSLTEKSHTTSYTILHNNNFYSNSCSADTYVPSIKTFSSVWAILNVIIFFCASLFYLRHLCIVKFISNLTK.

Positions 1–21 are cleaved as a signal peptide; the sequence is MTWKLFICFLSFGVIFLRVSS. Over 22 to 55 the chain is Virion surface; it reads LTEKSHTTSYTILHNNNFYSNSCSADTYVPSIKT. The chain crosses the membrane as a helical span at residues 56-76; that stretch reads FSSVWAILNVIIFFCASLFYL. Residues 77-90 are Intravirion-facing; it reads RHLCIVKFISNLTK.

This sequence belongs to the herpesviridae glycoprotein N family. In terms of assembly, interacts (via N-terminus) with gM (via N-terminus). The gM-gN heterodimer forms the gCII complex.

It is found in the virion membrane. Its subcellular location is the host membrane. It localises to the host Golgi apparatus. The protein localises to the host trans-Golgi network. In terms of biological role, envelope glycoprotein necessary for proper maturation of gM and modulation of its membrane fusion activity. Also plays a critical role in virion morphogenesis. In Saimiriine herpesvirus 2 (strain 11) (SaHV-2), this protein is Envelope glycoprotein N.